The sequence spans 671 residues: Diguanylate cyclase DgcP (671 aa).

Disordered regions lie at residues 204 to 223 (AAPS…PPQP) and 278 to 298 (EAGA…PEAP). Aspartate 549 contacts Mg(2+). Substrate is bound by residues asparagine 557, histidine 562, and aspartate 566. Glutamate 592 provides a ligand contact to Mg(2+). Residue glutamate 592 is part of the active site.

In terms of assembly, homodimer. Mg(2+) serves as cofactor.

It localises to the cell inner membrane. The enzyme catalyses 2 GTP = 3',3'-c-di-GMP + 2 diphosphate. The protein operates within purine metabolism; 3',5'-cyclic di-GMP biosynthesis. Functionally, catalyzes the synthesis of cyclic-di-GMP (c-di-GMP) via the condensation of 2 GTP molecules. Cyclic-di-GMP is a second messenger which controls cell surface-associated traits in bacteria. Localizes at the cell poles through interaction with FimV where it increases the local pools of c-di-GMP. The polypeptide is Diguanylate cyclase DgcP (dgcP) (Pseudomonas aeruginosa (strain ATCC 15692 / DSM 22644 / CIP 104116 / JCM 14847 / LMG 12228 / 1C / PRS 101 / PAO1)).